An 834-amino-acid chain; its full sequence is Probable basic-leucine zipper transcription factor D (834 aa).

The interval 83 to 160 is disordered; the sequence is NNNNMLNDHS…SNNNSSSEGE (78 aa). Over residues 90–111 the composition is skewed to polar residues; that stretch reads DHSSSPMRVPNSSPSLYNNSIE. The segment covering 119–157 has biased composition (low complexity); the sequence is DNSNNNNNNNNNINVNDINVNDINSNSTNNNESNNNSSS. Residues 211 to 246 are a coiled coil; that stretch reads SEQQQQQQQQQQQQQQQQQQQQQQQQQHQHLLQEHQ. Positions 378–405 are disordered; sequence VVDPPTHNQEDERNVKKQRRLIKNRESA. In terms of domain architecture, bZIP spans 391 to 454; that stretch reads NVKKQRRLIK…KQLAAQNSNS (64 aa). Residues 393-402 form a basic motif region; sequence KKQRRLIKNR. Positions 407-414 are leucine-zipper; it reads LSRMRKKI. Disordered stretches follow at residues 455–504 and 550–712; these read NNNS…QQQS and LSMS…KTPQ. Positions 550-595 are enriched in polar residues; sequence LSMSDSESSPQKSLRLSSNHHSLPDGTFNTIPIDQQTTATTNTKSL. Low complexity-rich tracts occupy residues 616–651 and 694–707; these read NNNN…NNNN and TTTT…TTST.

Belongs to the bZIP family.

The protein resides in the nucleus. Probable transcriptional regulator. This Dictyostelium discoideum (Social amoeba) protein is Probable basic-leucine zipper transcription factor D (bzpD).